Consider the following 100-residue polypeptide: MKQEKLSLNDVLIRPIITEKALILREQRKYVFEVNPLANKNLVKEAVEKLFNVKVEKVNILNMKPKPKRRGIFEGKTRSWKKAVVTLKEGYTIKELEGEH.

It belongs to the universal ribosomal protein uL23 family. In terms of assembly, part of the 50S ribosomal subunit. Contacts protein L29, and trigger factor when it is bound to the ribosome.

Functionally, one of the early assembly proteins it binds 23S rRNA. One of the proteins that surrounds the polypeptide exit tunnel on the outside of the ribosome. Forms the main docking site for trigger factor binding to the ribosome. This chain is Large ribosomal subunit protein uL23, found in Thermotoga sp. (strain RQ2).